Consider the following 389-residue polypeptide: Succinate--CoA ligase [ADP-forming] subunit beta (389 aa).

Residues 9-236 (KELFAKHEVP…KDATDPLELK (228 aa)) enclose the ATP-grasp domain. ATP contacts are provided by residues K45, 52-54 (GRG), S94, and E99. Residues N191 and D205 each coordinate Mg(2+). Residues N256 and 318–320 (GIT) each bind substrate.

This sequence belongs to the succinate/malate CoA ligase beta subunit family. Heterotetramer of two alpha and two beta subunits. It depends on Mg(2+) as a cofactor.

It catalyses the reaction succinate + ATP + CoA = succinyl-CoA + ADP + phosphate. The catalysed reaction is GTP + succinate + CoA = succinyl-CoA + GDP + phosphate. It functions in the pathway carbohydrate metabolism; tricarboxylic acid cycle; succinate from succinyl-CoA (ligase route): step 1/1. Succinyl-CoA synthetase functions in the citric acid cycle (TCA), coupling the hydrolysis of succinyl-CoA to the synthesis of either ATP or GTP and thus represents the only step of substrate-level phosphorylation in the TCA. The beta subunit provides nucleotide specificity of the enzyme and binds the substrate succinate, while the binding sites for coenzyme A and phosphate are found in the alpha subunit. This is Succinate--CoA ligase [ADP-forming] subunit beta from Rhodococcus jostii (strain RHA1).